A 111-amino-acid chain; its full sequence is Resistin-like alpha (111 aa).

A signal peptide spans 1–23 (MKTATCSLLICVFLLQLMVPVNT). 5 disulfides stabilise this stretch: C55–C108, C67–C107, C76–C93, C78–C95, and C82–C97.

It belongs to the resistin/FIZZ family. Monomer. In terms of tissue distribution, highest levels in adipose tissue.

Its subcellular location is the secreted. Probable hormone. Plays a role in pulmonary vascular remodeling. The chain is Resistin-like alpha (Retnla) from Rattus norvegicus (Rat).